The chain runs to 145 residues: Transcriptional regulator MraZ (145 aa).

SpoVT-AbrB domains follow at residues 7–54 (NATN…GPDL) and 83–126 (GVFM…QPQA).

The protein belongs to the MraZ family. Forms oligomers.

It localises to the cytoplasm. The protein resides in the nucleoid. This is Transcriptional regulator MraZ from Rhizobium johnstonii (strain DSM 114642 / LMG 32736 / 3841) (Rhizobium leguminosarum bv. viciae).